Consider the following 654-residue polypeptide: Fructose-1,6-bisphosphatase class 3 (654 aa).

The interval 288–307 (NPAFKPKKRPDKHERLTQRE) is disordered. Positions 298 to 307 (DKHERLTQRE) are enriched in basic and acidic residues.

Belongs to the FBPase class 3 family. It depends on Mn(2+) as a cofactor.

The enzyme catalyses beta-D-fructose 1,6-bisphosphate + H2O = beta-D-fructose 6-phosphate + phosphate. It functions in the pathway carbohydrate biosynthesis; gluconeogenesis. This chain is Fructose-1,6-bisphosphatase class 3, found in Staphylococcus aureus (strain MRSA252).